A 594-amino-acid chain; its full sequence is Elongation factor 4 (594 aa).

The tr-type G domain maps to 2 to 184 (KNIRNFSIIA…TIVAKVPAPE (183 aa)). GTP-binding positions include 14-19 (DHGKST) and 131-134 (NKID).

This sequence belongs to the TRAFAC class translation factor GTPase superfamily. Classic translation factor GTPase family. LepA subfamily.

The protein localises to the cell inner membrane. The catalysed reaction is GTP + H2O = GDP + phosphate + H(+). Its function is as follows. Required for accurate and efficient protein synthesis under certain stress conditions. May act as a fidelity factor of the translation reaction, by catalyzing a one-codon backward translocation of tRNAs on improperly translocated ribosomes. Back-translocation proceeds from a post-translocation (POST) complex to a pre-translocation (PRE) complex, thus giving elongation factor G a second chance to translocate the tRNAs correctly. Binds to ribosomes in a GTP-dependent manner. This is Elongation factor 4 from Francisella tularensis subsp. tularensis (strain WY96-3418).